Reading from the N-terminus, the 263-residue chain is UPF0758 protein NGR_c13970 (263 aa).

One can recognise an MPN domain in the interval 141–263; the sequence is VLSSWSAVID…HVSMKGLRLF (123 aa). Positions 212, 214, and 225 each coordinate Zn(2+). The short motif at 212–225 is the JAMM motif element; that stretch reads HNHPSGDPTPSRAD.

This sequence belongs to the UPF0758 family.

This is UPF0758 protein NGR_c13970 from Sinorhizobium fredii (strain NBRC 101917 / NGR234).